The following is a 484-amino-acid chain: Cysteine--tRNA ligase (484 aa).

Cysteine 27 lines the Zn(2+) pocket. The 'HIGH' region motif lies at 29-39; sequence PTTYNYIHLGN. Zn(2+) contacts are provided by cysteine 207, histidine 232, and glutamate 236. The 'KMSKS' region signature appears at 264 to 268; the sequence is KMSKS. Lysine 267 contributes to the ATP binding site.

Belongs to the class-I aminoacyl-tRNA synthetase family. As to quaternary structure, monomer. The cofactor is Zn(2+).

It localises to the cytoplasm. The catalysed reaction is tRNA(Cys) + L-cysteine + ATP = L-cysteinyl-tRNA(Cys) + AMP + diphosphate. The chain is Cysteine--tRNA ligase from Pelotomaculum thermopropionicum (strain DSM 13744 / JCM 10971 / SI).